A 373-amino-acid chain; its full sequence is Flagellar P-ring protein (373 aa).

The signal sequence occupies residues 1–27; the sequence is MPSFSPTLLKLAAAALSALLLSGVAAS.

The protein belongs to the FlgI family. In terms of assembly, the basal body constitutes a major portion of the flagellar organelle and consists of four rings (L,P,S, and M) mounted on a central rod.

It is found in the periplasm. The protein localises to the bacterial flagellum basal body. Its function is as follows. Assembles around the rod to form the L-ring and probably protects the motor/basal body from shearing forces during rotation. This chain is Flagellar P-ring protein, found in Rhodopseudomonas palustris (strain BisB5).